A 271-amino-acid polypeptide reads, in one-letter code: MSHIQRETSCSRPRLNSNMDADLYGYKWARDNVGQSGATIDRLYGKPDAPELFLKHGKGSVANDVTDEMVRLNWMTEFMPLPTIKHFIRTPDDAWLLTTAIPGKTAFQVLEEYPDSGENIVDALAVFLRRLHSIPVCNCPFNSDRVFRLVQAQSRMNNGLVDASDFDDERNGWPVEQVWKEMHKLLPFSPDSVVTHGDFSLDNLIFDEGKLIGCIDVGRVGIADRYQDLAILWNCLGEFSPSLQKRLFQKYGIDNPDMNKLQFTLMLDEFF.

D198 (proton acceptor) is an active-site residue.

It belongs to the aminoglycoside phosphotransferase family.

It catalyses the reaction kanamycin A + ATP = kanamycin 3'-phosphate + ADP + H(+). Resistance to kanamycin and structurally-related aminoglycosides, including amikacin. The protein is Aminoglycoside 3'-phosphotransferase of Salmonella typhimurium.